We begin with the raw amino-acid sequence, 493 residues long: 1-aminocyclopropane-1-carboxylate synthase CMW33 (493 aa).

K279 carries the N6-(pyridoxal phosphate)lysine modification.

The protein belongs to the class-I pyridoxal-phosphate-dependent aminotransferase family. Homodimer. Requires pyridoxal 5'-phosphate as cofactor.

The enzyme catalyses S-adenosyl-L-methionine = 1-aminocyclopropane-1-carboxylate + S-methyl-5'-thioadenosine + H(+). It participates in alkene biosynthesis; ethylene biosynthesis via S-adenosyl-L-methionine; ethylene from S-adenosyl-L-methionine: step 1/2. Catalyzes the formation of 1-aminocyclopropane-1-carboxylate, a direct precursor of ethylene in higher plants. This is 1-aminocyclopropane-1-carboxylate synthase CMW33 (ACS1) from Cucurbita maxima (Pumpkin).